A 676-amino-acid polypeptide reads, in one-letter code: Envelope glycoprotein (676 aa).

A signal peptide spans 1–32 (MGVTGILQLPRDRFKRTSFFLWVIILFQRTFS). The Extracellular segment spans residues 33 to 650 (IPLGVIHNST…NDNWWTGWRQ (618 aa)). N-linked (GlcNAc...) asparagine; by host glycosylation occurs at asparagine 40. 5 disulfide bridges follow: cysteine 53-cysteine 609, cysteine 108-cysteine 135, cysteine 121-cysteine 147, cysteine 511-cysteine 556, and cysteine 601-cysteine 608. The interval 54–201 (RDKLSSTNQL…DFFSSHPLRE (148 aa)) is receptor-binding. 11 N-linked (GlcNAc...) asparagine; by host glycosylation sites follow: asparagine 204, asparagine 228, asparagine 238, asparagine 257, asparagine 268, asparagine 296, asparagine 317, asparagine 333, asparagine 346, asparagine 386, and asparagine 413. Residues 305–485 (ELSFTAVSNR…SGKLGLITNT (181 aa)) are mucin-like region. Residues 314-335 (RAKNISGQSPARTSSDPGTNTT) are compositionally biased toward polar residues. The segment at 314 to 337 (RAKNISGQSPARTSSDPGTNTTTE) is disordered. Disordered stretches follow at residues 373 to 392 (TSLR…HNTP) and 402 to 479 (TQVE…SGKL). Over residues 414–427 (ASTTSDTPPATTAA) the composition is skewed to low complexity. 3 N-linked (GlcNAc...) asparagine; by host glycosylation sites follow: asparagine 436, asparagine 454, and asparagine 462. Residues 447 to 464 (ATTTSPQNHSETAGNNNT) are compositionally biased toward polar residues. Positions 524-539 (GAAIGLAWIPYFGPAA) are fusion peptide. Residues 554–595 (LICGLRQLANETTQALQLFLRATTELRTFSILNRKAIDFLLQ) adopt a coiled-coil conformation. Asparagine 563 is a glycosylation site (N-linked (GlcNAc...) asparagine; by host). Residues 615 to 634 (WTKNITDKIDQIIHDFVDKT) adopt a coiled-coil conformation. Asparagine 618 is a glycosylation site (N-linked (GlcNAc...) asparagine; by host). Residues 651-671 (WIPAGIGVTGVIIAVIALFCI) traverse the membrane as a helical segment. Residues cysteine 670 and cysteine 672 are each lipidated (S-palmitoyl cysteine; by host). The Cytoplasmic segment spans residues 672–676 (CKFVF).

This sequence belongs to the filoviruses glycoprotein family. As to quaternary structure, homotrimer; each monomer consists of a GP1 and a GP2 subunit linked by disulfide bonds. The resulting peplomers (GP1,2) protrude from the virus surface as spikes. Interacts with host integrin alpha-V/ITGAV. Interacts with host CLEC10A. Binds also to host CD209 and CLEC4M/DC-SIGN(R). Interacts with host FOLR1. Interacts with BST2; this interaction inhibits the antiviral effect of BST2 and this allows viral release from infected cells. Interacts with host FCN1; this interaction enhances viral entry. Interacts with host TLR4; this interaction induces cell death in T-lymphocytes or proinflammatory cytokines and SOCS1 production in monocytes. In terms of assembly, interacts with host entry receptor NPC1. GP1 and GP2delta are part of GP1,2delta soluble complexes released by ectodomain shedding. The signal peptide region modulates GP's high mannose glycosylation, thereby determining the efficiency of the interactions with DC-SIGN(R). In terms of processing, N-glycosylated. Post-translationally, O-glycosylated in the mucin-like region. Palmitoylation of GP2 is not required for its function. In terms of processing, specific enzymatic cleavages in vivo yield mature proteins. The precursor is processed into GP1 and GP2 by host cell furin in the trans Golgi, and maybe by other host proteases, to yield the mature GP1 and GP2 proteins. The cleavage site corresponds to the furin optimal cleavage sequence [KR]-X-[KR]-R. This cleavage does not seem to be required for function. After the internalization of the virus into cell endosomes, GP1 C-terminus is removed by the endosomal proteases cathepsin B, cathepsin L, or both, leaving a 19-kDa N-terminal fragment which is further digested by cathepsin B. Proteolytic processing of GP1,2 by host ADAM17 can remove the transmembrane anchor of GP2 and leads to shedding of complexes consisting in GP1 and truncated GP2 (GP1,2delta).

The protein resides in the virion membrane. It is found in the host cell membrane. It localises to the secreted. Functionally, trimeric GP1,2 complexes form the virion surface spikes and mediate the viral entry processes, with GP1 acting as the receptor-binding subunit and GP2 as the membrane fusion subunit. At later times of infection, down-regulates the expression of various host cell surface molecules that are essential for immune surveillance and cell adhesion. Down-modulates several integrins including ITGA1, ITGA2, ITGA3, ITGA4, ITGA5, ITGA6, ITGAV and ITGB1. This decrease in cell adhesion molecules may lead to cell detachment, contributing to the disruption of blood vessel integrity and hemorrhages developed during infection (cytotoxicity). Interacts with host TLR4 and thereby stimulates the differentiation and activation of monocytes leading to bystander death of T-lymphocytes. Down-regulates as well the function of host natural killer cells. Counteracts the antiviral effect of host BST2/tetherin that restricts release of progeny virions from infected cells. However, cooperates with VP40 and host BST2 to activate canonical NF-kappa-B pathway in a manner dependent on neddylation. Functions as a decoy for anti-GP1,2 antibodies thereby contributing to viral immune evasion. Interacts and activates host macrophages and dendritic cells inducing up-regulation of cytokine transcription. This effect is mediated throught activation of host TLR4. Its function is as follows. Responsible for binding to the receptor(s) on target cells. Interacts with CD209/DC-SIGN and CLEC4M/DC-SIGNR which act as cofactors for virus entry into dendritic cells (DCs) and endothelial cells. Binding to the macrophage specific lectin CLEC10A also seems to enhance virus infectivity. Interaction with FOLR1/folate receptor alpha may be a cofactor for virus entry in some cell types, although results are contradictory. Members of the Tyro3 receptor tyrosine kinase family also seem to be cell entry factors in filovirus infection. Once attached, the virions are internalized through clathrin-dependent endocytosis and/or macropinocytosis. After internalization of the virus into the endosomes of the host cell, proteolysis of GP1 by two cysteine proteases, CTSB/cathepsin B and CTSL/cathepsin L removes the glycan cap and allows GP1 binding to the host entry receptor NPC1. NPC1-binding, Ca(2+) and acidic pH induce a conformational change of GP2, which unmasks its fusion peptide and permit membranes fusion. In terms of biological role, acts as a class I viral fusion protein. Under the current model, the protein has at least 3 conformational states: pre-fusion native state, pre-hairpin intermediate state, and post-fusion hairpin state. During viral and target cell membrane fusion, the coiled coil regions (heptad repeats) assume a trimer-of-hairpins structure, positioning the fusion peptide in close proximity to the C-terminal region of the ectodomain. The formation of this structure appears to drive apposition and subsequent fusion of viral and target cell membranes. Responsible for penetration of the virus into the cell cytoplasm by mediating the fusion of the membrane of the endocytosed virus particle with the endosomal membrane. Low pH in endosomes induces an irreversible conformational change in GP2, releasing the fusion hydrophobic peptide. The protein is Envelope glycoprotein (GP) of Epomops franqueti (Franquet's epauletted fruit bat).